Here is a 359-residue protein sequence, read N- to C-terminus: Guanine nucleotide-binding protein G(q) subunit alpha (359 aa).

2 S-palmitoyl cysteine lipidation sites follow: Cys9 and Cys10. Residues 38-359 (RELKLLLLGT…QLNLKEYNLV (322 aa)) form the G-alpha domain. The G1 motif stretch occupies residues 41–54 (KLLLLGTGESGKST). Ser50, Gly51, Lys52, Ser53, Thr54, Ser156, Leu180, Arg181, and Arg183 together coordinate GTP. Ser53 contacts Mg(2+). The interval 178–186 (DVLRVRVPT) is G2 motif. Thr186 contacts Mg(2+). A G3 motif region spans residues 201–210 (FRMVDVGGQR). Gln209 carries the post-translational modification 5-glutamyl histamine. The segment at 270-277 (ILFLNKKD) is G4 motif. 4 residues coordinate GTP: Asn274, Lys275, Asp277, and Ala331. The G5 motif stretch occupies residues 329-334 (TCATDT).

Belongs to the G-alpha family. G(q) subfamily. G proteins are composed of 3 units; alpha, beta and gamma. The alpha chain contains the guanine nucleotide binding site. Interacts (GDP-bound form) with RIC8A (via C-terminus); promoting GNAQ folding and association with the plasma membrane. Binds NHERF1. Forms a complex with PECAM1 and BDKRB2. Interacts with GAS2L2. Post-translationally, palmitoylated by ZDHHC3 and ZDHHC7. Palmitoylation occurs in the Golgi and participates in the localization of GNAQ to the plasma membrane. Histaminylated at Gln-209 residues by TGM2.

It is found in the cell membrane. The protein localises to the golgi apparatus. It localises to the nucleus. The protein resides in the nucleus membrane. The catalysed reaction is GTP + H2O = GDP + phosphate + H(+). Functionally, guanine nucleotide-binding proteins (G proteins) function as transducers downstream of G protein-coupled receptors (GPCRs) in numerous signaling cascades. The alpha chain contains the guanine nucleotide binding site and alternates between an active, GTP-bound state and an inactive, GDP-bound state. Signaling by an activated GPCR promotes GDP release and GTP binding. The alpha subunit has a low GTPase activity that converts bound GTP to GDP, thereby terminating the signal. Both GDP release and GTP hydrolysis are modulated by numerous regulatory proteins. Signaling is mediated via phospholipase C-beta-dependent inositol lipid hydrolysis for signal propagation: activates phospholipase C-beta: following GPCR activation, GNAQ activates PLC-beta (PLCB1, PLCB2, PLCB3 or PLCB4), leading to production of diacylglycerol (DAG) and inositol 1,4,5-trisphosphate (IP3). Required for platelet activation. Regulates B-cell selection and survival and is required to prevent B-cell-dependent autoimmunity. Regulates chemotaxis of BM-derived neutrophils and dendritic cells (in vitro). Transduces FFAR4 signaling in response to long-chain fatty acids (LCFAs). Together with GNA11, required for heart development. The protein is Guanine nucleotide-binding protein G(q) subunit alpha (Gnaq) of Rattus norvegicus (Rat).